We begin with the raw amino-acid sequence, 89 residues long: Small ribosomal subunit protein uS15 (89 aa).

Belongs to the universal ribosomal protein uS15 family. In terms of assembly, part of the 30S ribosomal subunit. Forms a bridge to the 50S subunit in the 70S ribosome, contacting the 23S rRNA.

Functionally, one of the primary rRNA binding proteins, it binds directly to 16S rRNA where it helps nucleate assembly of the platform of the 30S subunit by binding and bridging several RNA helices of the 16S rRNA. Forms an intersubunit bridge (bridge B4) with the 23S rRNA of the 50S subunit in the ribosome. The chain is Small ribosomal subunit protein uS15 from Rhodococcus erythropolis (strain PR4 / NBRC 100887).